The primary structure comprises 281 residues: Large ribosomal subunit protein uL2 (281 aa).

The tract at residues 220 to 281 (VRGSVMNPND…RRRDGKALSK (62 aa)) is disordered. Basic residues predominate over residues 258–271 (KTRKKNKQSNKMIM). Residues 272–281 (RRRDGKALSK) are compositionally biased toward basic and acidic residues.

This sequence belongs to the universal ribosomal protein uL2 family. In terms of assembly, part of the 50S ribosomal subunit. Forms a bridge to the 30S subunit in the 70S ribosome.

Its function is as follows. One of the primary rRNA binding proteins. Required for association of the 30S and 50S subunits to form the 70S ribosome, for tRNA binding and peptide bond formation. It has been suggested to have peptidyltransferase activity; this is somewhat controversial. Makes several contacts with the 16S rRNA in the 70S ribosome. This is Large ribosomal subunit protein uL2 from Lachnoclostridium phytofermentans (strain ATCC 700394 / DSM 18823 / ISDg) (Clostridium phytofermentans).